The chain runs to 603 residues: Protein US26 (603 aa).

Acidic residues predominate over residues 496 to 513; the sequence is EEEDQEEDDTSDDDDQEK. Disordered stretches follow at residues 496 to 536 and 549 to 568; these read EEED…GSLE and AVAE…DTAQ. The segment covering 517–533 has biased composition (polar residues); sequence NPQNNIGSLTRTPSSPG.

Belongs to the herpesviridae US22 family.

This chain is Protein US26 (US26), found in Human cytomegalovirus (strain Merlin) (HHV-5).